The primary structure comprises 518 residues: Laccase (518 aa).

The N-terminal stretch at 1-21 (MSRFQSLLSFVLVSLAAVANA) is a signal peptide. Plastocyanin-like domains follow at residues 23-148 (IGPV…FVVY) and 160-302 (IDND…ILRY). 2 N-linked (GlcNAc...) asparagine glycosylation sites follow: asparagine 72 and asparagine 75. Histidine 85, histidine 87, histidine 130, and histidine 132 together coordinate Cu cation. Disulfide bonds link cysteine 106–cysteine 507 and cysteine 138–cysteine 226. Residue asparagine 229 is glycosylated (N-linked (GlcNAc...) asparagine). Positions 308–330 (VEPTTTQTTSTKPLNEADLHPLT) are disordered. Residues asparagine 354, asparagine 362, and asparagine 398 are each glycosylated (N-linked (GlcNAc...) asparagine). Residues 369–489 (SVPVLLQILS…AGFAVVLAED (121 aa)) form the Plastocyanin-like 3 domain. The Cu cation site is built by histidine 416, histidine 419, histidine 421, histidine 471, cysteine 472, histidine 473, and histidine 477.

Belongs to the multicopper oxidase family. It depends on Cu cation as a cofactor.

It is found in the secreted. It catalyses the reaction 4 hydroquinone + O2 = 4 benzosemiquinone + 2 H2O. In terms of biological role, lignin degradation and detoxification of lignin-derived products. Cleaves the C-C and C-O bonds of some phenolic lignin model compounds (such as O- and P-quinols, aminophenols and phenylenediamine). May also be involved in synthesis of phenoxazinone pigments. The sequence is that of Laccase (LCC3-1) from Pycnoporus cinnabarinus (Cinnabar-red polypore).